The following is a 118-amino-acid chain: Large ribosomal subunit protein bL20 (118 aa).

The protein belongs to the bacterial ribosomal protein bL20 family.

In terms of biological role, binds directly to 23S ribosomal RNA and is necessary for the in vitro assembly process of the 50S ribosomal subunit. It is not involved in the protein synthesizing functions of that subunit. This chain is Large ribosomal subunit protein bL20, found in Synechococcus sp. (strain JA-2-3B'a(2-13)) (Cyanobacteria bacterium Yellowstone B-Prime).